The following is a 295-amino-acid chain: Protein FAM221A (295 aa).

The tract at residues 244–295 is disordered; the sequence is SEPPGIDKQVSSMRLSEEDDMAYFERRYQERLRKEKEHKRQKNSKPPTTQRP. Residues 266–278 show a composition bias toward basic and acidic residues; that stretch reads YFERRYQERLRKE.

The protein belongs to the FAM221 family.

The protein is Protein FAM221A (fam221a) of Xenopus laevis (African clawed frog).